A 329-amino-acid chain; its full sequence is Haptoglobin (329 aa).

An N-linked (GlcNAc...) asparagine glycan is attached at Asn9. The region spanning 13 to 70 (VSLPKPPVIENGYVEHMIRYQCKPFYKLHTEGDGVYTLNSEKHWTNKAVGEKLPECEA) is the Sushi domain. 2 disulfide bridges follow: Cys34–Cys68 and Cys72–Cys189. Arg84 is a propeptide. One can recognise a Peptidase S1 domain in the interval 85–327 (IMGGSVDAKG…VLAWVQETIA (243 aa)). 2 N-linked (GlcNAc...) asparagine glycosylation sites follow: Asn107 and Asn214. Cystine bridges form between Cys232-Cys263 and Cys274-Cys304. An interaction with CD163 region spans residues 241-246 (VPEKKS).

It belongs to the peptidase S1 family. Tetramer of two alpha and two beta chains; disulfide-linked. The hemoglobin/haptoglobin complex is composed of a haptoglobin dimer bound to two hemoglobin alpha-beta dimers. Interacts with CD163. Interacts with ERGIC3. Expressed by the liver and secreted in plasma.

The protein resides in the secreted. It is found in the extracellular space. In terms of biological role, as a result of hemolysis, hemoglobin is found to accumulate in the kidney and is secreted in the urine. Haptoglobin captures, and combines with free plasma hemoglobin to allow hepatic recycling of heme iron and to prevent kidney damage. Haptoglobin also acts as an antioxidant, has antibacterial activity and plays a role in modulating many aspects of the acute phase response. Hemoglobin/haptoglobin complexes are rapidly cleared by the macrophage CD163 scavenger receptor expressed on the surface of liver Kupfer cells through an endocytic lysosomal degradation pathway. This chain is Haptoglobin (HP), found in Canis lupus familiaris (Dog).